The following is a 254-amino-acid chain: Putative electron transfer flavoprotein subunit YdiQ (254 aa).

This sequence belongs to the ETF beta-subunit/FixA family. As to quaternary structure, ydiR and YdiQ form a heterodimer.

In terms of biological role, may play a role in a redox process. This chain is Putative electron transfer flavoprotein subunit YdiQ (ydiQ), found in Escherichia coli (strain K12).